The chain runs to 165 residues: Small ribosomal subunit protein eS10 (165 aa).

The interval 92–165 (ATLRRSRPET…FGRGRGQAPQ (74 aa)) is disordered. Residues 97–128 (SRPETGRPRPKGLEGERPPRLPRGETDRDTYR) are compositionally biased toward basic and acidic residues. A compositionally biased stretch (low complexity) spans 142 to 153 (AGAGAATEFQFR). Over residues 154–165 (GGFGRGRGQAPQ) the composition is skewed to gly residues.

Belongs to the eukaryotic ribosomal protein eS10 family. As to quaternary structure, component of the small ribosomal subunit.

Its subcellular location is the cytoplasm. The protein resides in the nucleus. It localises to the nucleolus. Component of the 40S ribosomal subunit. The ribosome is a large ribonucleoprotein complex responsible for the synthesis of proteins in the cell. In Xenopus laevis (African clawed frog), this protein is Small ribosomal subunit protein eS10 (rps10).